The chain runs to 287 residues: Cbb3-type cytochrome c oxidase subunit FixP (287 aa).

The Cytoplasmic portion of the chain corresponds to 1 to 33; that stretch reads MSQKHIDELSGVETTGHEWDGIQELNNPMPRWW. Residues 34–54 form a helical membrane-spanning segment; it reads IWTFYVTILWAIGYAIAYPAI. Residues 55–287 lie on the Periplasmic side of the membrane; it reads PMITSATNGY…IFVHALGGGT (233 aa). 2 consecutive Cytochrome c domains span residues 108 to 196 and 203 to 284; these read FAIA…WGLT and GLAA…HALG. Residues Cys121, Cys124, His125, Met173, Cys216, Cys219, His220, and Met261 each contribute to the heme c site.

This sequence belongs to the CcoP / FixP family. Component of the cbb3-type cytochrome c oxidase at least composed of FixN, FixO, FixQ and FixP. Heme c is required as a cofactor.

The protein resides in the cell inner membrane. It participates in energy metabolism; oxidative phosphorylation. Its function is as follows. C-type cytochrome. Part of the cbb3-type cytochrome c oxidase complex. FixP subunit is required for transferring electrons from donor cytochrome c via its heme groups to FixO subunit. From there, electrons are shuttled to the catalytic binuclear center of FixN subunit where oxygen reduction takes place. The complex also functions as a proton pump. The polypeptide is Cbb3-type cytochrome c oxidase subunit FixP (Rhizobium etli (strain ATCC 51251 / DSM 11541 / JCM 21823 / NBRC 15573 / CFN 42)).